A 198-amino-acid chain; its full sequence is Cell division protein SepF (198 aa).

Positions 170-198 (EVPQPPARPARPASTNPPAWGNETNRMAQ) are disordered. Residues 179–188 (ARPASTNPPA) show a composition bias toward low complexity.

It belongs to the SepF family. In terms of assembly, homodimer. Interacts with FtsZ.

The protein localises to the cytoplasm. Functionally, cell division protein that is part of the divisome complex and is recruited early to the Z-ring. Probably stimulates Z-ring formation, perhaps through the cross-linking of FtsZ protofilaments. Its function overlaps with FtsA. The chain is Cell division protein SepF from Trichormus variabilis (strain ATCC 29413 / PCC 7937) (Anabaena variabilis).